Here is a 499-residue protein sequence, read N- to C-terminus: Maturase K (499 aa).

Belongs to the intron maturase 2 family. MatK subfamily.

It localises to the plastid. It is found in the chloroplast. In terms of biological role, usually encoded in the trnK tRNA gene intron. Probably assists in splicing its own and other chloroplast group II introns. This chain is Maturase K, found in Gymnocladus dioicus (Kentucky coffee tree).